We begin with the raw amino-acid sequence, 614 residues long: Probable LRR receptor-like serine/threonine-protein kinase At5g45780 (614 aa).

The signal sequence occupies residues M1–A26. Residues M27–S242 lie on the Extracellular side of the membrane. LRR repeat units lie at residues H104–L126, E128–T151, H152–L174, and G176–K197. Residues N186, N193, and N224 are each glycosylated (N-linked (GlcNAc...) asparagine). The chain crosses the membrane as a helical span at residues F243–L263. Topologically, residues W264–R614 are cytoplasmic. T297 carries the phosphothreonine modification. The Protein kinase domain occupies F300 to V576. Residue L306–V314 participates in ATP binding. T323 carries the phosphothreonine modification. Position 328 (K328) interacts with ATP. S380 is subject to Phosphoserine. Residue D426 is the Proton acceptor of the active site. Residues T459, T460, and T465 each carry the phosphothreonine modification. At Y473 the chain carries Phosphotyrosine. S475 is modified (phosphoserine). T476 carries the phosphothreonine modification. S480 carries the post-translational modification Phosphoserine. The residue at position 555 (T555) is a Phosphothreonine.

It belongs to the protein kinase superfamily. Ser/Thr protein kinase family.

Its subcellular location is the membrane. It carries out the reaction L-seryl-[protein] + ATP = O-phospho-L-seryl-[protein] + ADP + H(+). The enzyme catalyses L-threonyl-[protein] + ATP = O-phospho-L-threonyl-[protein] + ADP + H(+). The polypeptide is Probable LRR receptor-like serine/threonine-protein kinase At5g45780 (Arabidopsis thaliana (Mouse-ear cress)).